The following is a 550-amino-acid chain: Glucose-6-phosphate isomerase 2 (550 aa).

The active-site Proton donor is E359. Active-site residues include H390 and K514.

This sequence belongs to the GPI family.

Its subcellular location is the cytoplasm. It carries out the reaction alpha-D-glucose 6-phosphate = beta-D-fructose 6-phosphate. It functions in the pathway carbohydrate biosynthesis; gluconeogenesis. The protein operates within carbohydrate degradation; glycolysis; D-glyceraldehyde 3-phosphate and glycerone phosphate from D-glucose: step 2/4. Catalyzes the reversible isomerization of glucose-6-phosphate to fructose-6-phosphate. This chain is Glucose-6-phosphate isomerase 2, found in Streptomyces avermitilis (strain ATCC 31267 / DSM 46492 / JCM 5070 / NBRC 14893 / NCIMB 12804 / NRRL 8165 / MA-4680).